The primary structure comprises 155 residues: Endoribonuclease YbeY (155 aa).

3 residues coordinate Zn(2+): His-120, His-124, and His-130.

The protein belongs to the endoribonuclease YbeY family. It depends on Zn(2+) as a cofactor.

The protein localises to the cytoplasm. Its function is as follows. Single strand-specific metallo-endoribonuclease involved in late-stage 70S ribosome quality control and in maturation of the 3' terminus of the 16S rRNA. The polypeptide is Endoribonuclease YbeY (Staphylococcus aureus (strain Mu3 / ATCC 700698)).